The chain runs to 289 residues: 4-diphosphocytidyl-2-C-methyl-D-erythritol kinase (289 aa).

The active site involves Lys-10. 94 to 104 (PVAAGLAGGSS) contacts ATP. Residue Asp-136 is part of the active site.

It belongs to the GHMP kinase family. IspE subfamily.

It catalyses the reaction 4-CDP-2-C-methyl-D-erythritol + ATP = 4-CDP-2-C-methyl-D-erythritol 2-phosphate + ADP + H(+). It participates in isoprenoid biosynthesis; isopentenyl diphosphate biosynthesis via DXP pathway; isopentenyl diphosphate from 1-deoxy-D-xylulose 5-phosphate: step 3/6. In terms of biological role, catalyzes the phosphorylation of the position 2 hydroxy group of 4-diphosphocytidyl-2C-methyl-D-erythritol. The polypeptide is 4-diphosphocytidyl-2-C-methyl-D-erythritol kinase (Bacillus velezensis (strain DSM 23117 / BGSC 10A6 / LMG 26770 / FZB42) (Bacillus amyloliquefaciens subsp. plantarum)).